We begin with the raw amino-acid sequence, 597 residues long: MSVDSSSTHRHRCVAARLVPLAAAGAAVTVAVGTAAAWAHAGAVQHRCIHDAMQARVRQSVAAQRMAPSAVSAVGLPHVTLDAGNTAAGADPSTGTANVVRAANWGALRIAVSAEDLTDPAYHCARVGQRVNNHVGDIVTCTAEDILTDEKRDILVKHLVPQALQLHRERLKVQQVQGKWKVTGMTADVCRYFKVPPAHVTGGVTNTDFVLYVASVPSEESVLAWATTCQVFADGHPAVGVINIPAANIASRYDQLVTRVVAHEMAHALGFSGTFFDRVGIVQKVPDVRGKPYFTPMINSSTAVAKAREQYGCNSLEYLEMEDQGSAAPGSHIKANAQDELMAPTASAGYYTALTMAVFQDLGFYQADFSKAEAMPWGRNAACAFLSEKCMANGITKWPAMFCNESADAIRCPTSRLGVGMCDVTPYQALPPYLQYFTDPFLAGSSAFMDYCPVVVPYADGSCAQSASEADAAFKAFNVFSDAAACIDGAFRPKTTHGLIKSYAALCANVKCDTAARTYSVQVRGSSGYANCTPGLRFDLSTVSDAFEKGGYVTCPPYVEVCQGNAQAIKDGGNAAGRRGPRAATALVVAALLAVAL.

An N-terminal signal peptide occupies residues 1–39 (MSVDSSSTHRHRCVAARLVPLAAAGAAVTVAVGTAAAWA). Residues 40–99 (HAGAVQHRCIHDAMQARVRQSVAAQRMAPSAVSAVGLPHVTLDAGNTAAGADPSTGTANV) constitute a propeptide, activation peptide. 2 cysteine pairs are disulfide-bonded: Cys-124–Cys-141 and Cys-190–Cys-229. Zn(2+) is bound at residue His-263. Glu-264 is a catalytic residue. His-267 is a Zn(2+) binding site. Asn-299 carries an N-linked (GlcNAc...) asparagine glycan. 7 disulfide bridges follow: Cys-313/Cys-383, Cys-390/Cys-452, Cys-403/Cys-422, Cys-412/Cys-486, Cys-463/Cys-507, Cys-512/Cys-562, and Cys-532/Cys-555. His-332 provides a ligand contact to Zn(2+). Asn-404 carries an N-linked (GlcNAc...) asparagine glycan. Asn-574 is lipidated: GPI-anchor amidated asparagine. The propeptide at 575–597 (AAGRRGPRAATALVVAALLAVAL) is removed in mature form.

Belongs to the peptidase M8 family. The cofactor is Zn(2+).

Its subcellular location is the cell membrane. The catalysed reaction is Preference for hydrophobic residues at P1 and P1' and basic residues at P2' and P3'. A model nonapeptide is cleaved at -Ala-Tyr-|-Leu-Lys-Lys-.. Functionally, has an integral role during the infection of macrophages in the mammalian host. The polypeptide is Leishmanolysin (gp63) (Leishmania amazonensis).